Consider the following 436-residue polypeptide: Histidinol dehydrogenase (436 aa).

Positions 237, 259, and 262 each coordinate substrate. Positions 259 and 262 each coordinate Zn(2+). Active-site proton acceptor residues include E327 and H328. Substrate contacts are provided by H328, D361, E415, and H420. Position 361 (D361) interacts with Zn(2+). A Zn(2+)-binding site is contributed by H420.

Belongs to the histidinol dehydrogenase family. It depends on Zn(2+) as a cofactor.

The catalysed reaction is L-histidinol + 2 NAD(+) + H2O = L-histidine + 2 NADH + 3 H(+). It functions in the pathway amino-acid biosynthesis; L-histidine biosynthesis; L-histidine from 5-phospho-alpha-D-ribose 1-diphosphate: step 9/9. Catalyzes the sequential NAD-dependent oxidations of L-histidinol to L-histidinaldehyde and then to L-histidine. The protein is Histidinol dehydrogenase of Helicobacter hepaticus (strain ATCC 51449 / 3B1).